A 174-amino-acid polypeptide reads, in one-letter code: UPF0316 protein lin1888 (174 aa).

3 helical membrane passes run 4–24, 36–56, and 62–82; these read GIFI…IYTV, LAAL…SLVL, and IANV…GMKI.

This sequence belongs to the UPF0316 family.

Its subcellular location is the cell membrane. In Listeria innocua serovar 6a (strain ATCC BAA-680 / CLIP 11262), this protein is UPF0316 protein lin1888.